The sequence spans 854 residues: Protein translocase subunit SecA (854 aa).

Residues Q89, 107-111 (GEGKT), and D501 contribute to the ATP site.

The protein belongs to the SecA family. In terms of assembly, monomer and homodimer. Part of the essential Sec protein translocation apparatus which comprises SecA, SecYEG and auxiliary proteins SecDF-YajC and YidC.

The protein localises to the cell inner membrane. It is found in the cytoplasm. It carries out the reaction ATP + H2O + cellular proteinSide 1 = ADP + phosphate + cellular proteinSide 2.. Its function is as follows. Part of the Sec protein translocase complex. Interacts with the SecYEG preprotein conducting channel. Has a central role in coupling the hydrolysis of ATP to the transfer of proteins into and across the cell membrane, serving both as a receptor for the preprotein-SecB complex and as an ATP-driven molecular motor driving the stepwise translocation of polypeptide chains across the membrane. The chain is Protein translocase subunit SecA from Pelagibacter ubique (strain HTCC1062).